A 672-amino-acid chain; its full sequence is tRNA 5-methylaminomethyl-2-thiouridine biosynthesis bifunctional protein MnmC (672 aa).

A tRNA (mnm(5)s(2)U34)-methyltransferase region spans residues 1-235 (MTRVLEPAEP…KRDMTVARFA (235 aa)). An FAD-dependent cmnm(5)s(2)U34 oxidoreductase region spans residues 259–672 (IGAGLAGCAV…SAGPGVDAAG (414 aa)).

It in the N-terminal section; belongs to the methyltransferase superfamily. tRNA (mnm(5)s(2)U34)-methyltransferase family. This sequence in the C-terminal section; belongs to the DAO family. FAD is required as a cofactor.

The protein localises to the cytoplasm. It catalyses the reaction 5-aminomethyl-2-thiouridine(34) in tRNA + S-adenosyl-L-methionine = 5-methylaminomethyl-2-thiouridine(34) in tRNA + S-adenosyl-L-homocysteine + H(+). Functionally, catalyzes the last two steps in the biosynthesis of 5-methylaminomethyl-2-thiouridine (mnm(5)s(2)U) at the wobble position (U34) in tRNA. Catalyzes the FAD-dependent demodification of cmnm(5)s(2)U34 to nm(5)s(2)U34, followed by the transfer of a methyl group from S-adenosyl-L-methionine to nm(5)s(2)U34, to form mnm(5)s(2)U34. The sequence is that of tRNA 5-methylaminomethyl-2-thiouridine biosynthesis bifunctional protein MnmC from Cupriavidus metallidurans (strain ATCC 43123 / DSM 2839 / NBRC 102507 / CH34) (Ralstonia metallidurans).